A 177-amino-acid polypeptide reads, in one-letter code: ATP synthase subunit delta (177 aa).

The protein belongs to the ATPase delta chain family. As to quaternary structure, F-type ATPases have 2 components, F(1) - the catalytic core - and F(0) - the membrane proton channel. F(1) has five subunits: alpha(3), beta(3), gamma(1), delta(1), epsilon(1). F(0) has three main subunits: a(1), b(2) and c(10-14). The alpha and beta chains form an alternating ring which encloses part of the gamma chain. F(1) is attached to F(0) by a central stalk formed by the gamma and epsilon chains, while a peripheral stalk is formed by the delta and b chains.

It is found in the cell inner membrane. Its function is as follows. F(1)F(0) ATP synthase produces ATP from ADP in the presence of a proton or sodium gradient. F-type ATPases consist of two structural domains, F(1) containing the extramembraneous catalytic core and F(0) containing the membrane proton channel, linked together by a central stalk and a peripheral stalk. During catalysis, ATP synthesis in the catalytic domain of F(1) is coupled via a rotary mechanism of the central stalk subunits to proton translocation. Functionally, this protein is part of the stalk that links CF(0) to CF(1). It either transmits conformational changes from CF(0) to CF(1) or is implicated in proton conduction. In Edwardsiella ictaluri (strain 93-146), this protein is ATP synthase subunit delta.